We begin with the raw amino-acid sequence, 190 residues long: Inosine triphosphate pyrophosphatase (190 aa).

9-14 (TGNAKK) contributes to the ITP binding site. Glutamate 39 is a Mg(2+) binding site. ITP is bound by residues lysine 51, 67–68 (DT), lysine 84, 144–147 (FGWD), lysine 167, and 172–173 (HR).

It belongs to the HAM1 NTPase family. Homodimer. Requires Mg(2+) as cofactor. Mn(2+) is required as a cofactor.

The protein resides in the cytoplasm. It catalyses the reaction ITP + H2O = IMP + diphosphate + H(+). The catalysed reaction is dITP + H2O = dIMP + diphosphate + H(+). It carries out the reaction XTP + H2O = XMP + diphosphate + H(+). Its function is as follows. Pyrophosphatase that hydrolyzes non-canonical purine nucleotides such as inosine triphosphate (ITP), deoxyinosine triphosphate (dITP) or xanthosine 5'-triphosphate (XTP) to their respective monophosphate derivatives. The enzyme does not distinguish between the deoxy- and ribose forms. Probably excludes non-canonical purines from RNA and DNA precursor pools, thus preventing their incorporation into RNA and DNA and avoiding chromosomal lesions. This Pediculus humanus subsp. corporis (Body louse) protein is Inosine triphosphate pyrophosphatase.